A 655-amino-acid chain; its full sequence is Very long-chain specific acyl-CoA dehydrogenase, mitochondrial (655 aa).

The N-terminal 40 residues, 1 to 40 (MQAARIAPSLGRQLLRFGGGSSRPTALLGQPWPGPARRPY), are a transit peptide targeting the mitochondrion. The catalytic stretch occupies residues 41–482 (AGGAAQLALD…ALQGCMDKGK (442 aa)). At K51 the chain carries N6-acetyllysine. Position 71 is an N6-acetyllysine; alternate (K71). N6-succinyllysine; alternate is present on K71. Residue K195 is modified to N6-succinyllysine. 214–223 (FCLTEPSSGS) serves as a coordination point for FAD. C237 is subject to S-nitrosocysteine. N6-acetyllysine; alternate is present on K239. K239 bears the N6-succinyllysine; alternate mark. 249 to 251 (WIS) contributes to the FAD binding site. N6-acetyllysine; alternate occurs at positions 276 and 278. K276 and K278 each carry N6-succinyllysine; alternate. An N6-acetyllysine modification is found at K298. K331 is subject to N6-acetyllysine; alternate. Residue K331 is modified to N6-succinyllysine; alternate. The residue at position 372 (K372) is an N6-succinyllysine. 461–463 (FEG) lines the substrate pocket. The Proton acceptor role is filled by E462. 464-466 (TND) serves as a coordination point for FAD. The residue at position 482 (K482) is an N6-acetyllysine; alternate. The residue at position 482 (K482) is an N6-succinyllysine; alternate. The segment at 483–516 (ELSGLGSALKNPFGNAGLLLGEAGKQLRRRAGLG) is membrane-anchoring. Phosphoserine is present on residues S517 and S522. K550 carries the N6-acetyllysine modification. Position 556 is an N6-acetyllysine; alternate (K556). Residue K556 is modified to N6-succinyllysine; alternate. Residue Q562 coordinates FAD. At K639 the chain carries N6-succinyllysine.

It belongs to the acyl-CoA dehydrogenase family. Homodimer. Homodimerizes after import into the mitochondrion. Requires FAD as cofactor. S-nitrosylation at Cys-237 in liver improves catalytic efficiency.

The protein resides in the mitochondrion inner membrane. The catalysed reaction is a very-long-chain 2,3-saturated fatty acyl-CoA + oxidized [electron-transfer flavoprotein] + H(+) = a very-long-chain (2E)-enoyl-CoA + reduced [electron-transfer flavoprotein]. It carries out the reaction dodecanoyl-CoA + oxidized [electron-transfer flavoprotein] + H(+) = (2E)-dodecenoyl-CoA + reduced [electron-transfer flavoprotein]. It catalyses the reaction tetradecanoyl-CoA + oxidized [electron-transfer flavoprotein] + H(+) = (2E)-tetradecenoyl-CoA + reduced [electron-transfer flavoprotein]. The enzyme catalyses oxidized [electron-transfer flavoprotein] + hexadecanoyl-CoA + H(+) = (2E)-hexadecenoyl-CoA + reduced [electron-transfer flavoprotein]. The catalysed reaction is octadecanoyl-CoA + oxidized [electron-transfer flavoprotein] + H(+) = (2E)-octadecenoyl-CoA + reduced [electron-transfer flavoprotein]. It carries out the reaction eicosanoyl-CoA + oxidized [electron-transfer flavoprotein] + H(+) = (2E)-eicosenoyl-CoA + reduced [electron-transfer flavoprotein]. It catalyses the reaction docosanoyl-CoA + oxidized [electron-transfer flavoprotein] + H(+) = (2E)-docosenoyl-CoA + reduced [electron-transfer flavoprotein]. The enzyme catalyses tetracosanoyl-CoA + oxidized [electron-transfer flavoprotein] + H(+) = (2E)-tetracosenoyl-CoA + reduced [electron-transfer flavoprotein]. It participates in lipid metabolism; mitochondrial fatty acid beta-oxidation. Functionally, very long-chain specific acyl-CoA dehydrogenase is one of the acyl-CoA dehydrogenases that catalyze the first step of mitochondrial fatty acid beta-oxidation, an aerobic process breaking down fatty acids into acetyl-CoA and allowing the production of energy from fats. The first step of fatty acid beta-oxidation consists in the removal of one hydrogen from C-2 and C-3 of the straight-chain fatty acyl-CoA thioester, resulting in the formation of trans-2-enoyl-CoA. Among the different mitochondrial acyl-CoA dehydrogenases, very long-chain specific acyl-CoA dehydrogenase acts specifically on acyl-CoAs with saturated 12 to 24 carbons long primary chains. The polypeptide is Very long-chain specific acyl-CoA dehydrogenase, mitochondrial (Macaca fascicularis (Crab-eating macaque)).